The following is a 323-amino-acid chain: Acetyl-coenzyme A carboxylase carboxyl transferase subunit alpha (323 aa).

Residues 39–293 form the CoA carboxyltransferase C-terminal domain; sequence RLAGKSQQLT…KRSLAESLRQ (255 aa).

This sequence belongs to the AccA family. As to quaternary structure, acetyl-CoA carboxylase is a heterohexamer composed of biotin carboxyl carrier protein (AccB), biotin carboxylase (AccC) and two subunits each of ACCase subunit alpha (AccA) and ACCase subunit beta (AccD).

The protein resides in the cytoplasm. It catalyses the reaction N(6)-carboxybiotinyl-L-lysyl-[protein] + acetyl-CoA = N(6)-biotinyl-L-lysyl-[protein] + malonyl-CoA. It participates in lipid metabolism; malonyl-CoA biosynthesis; malonyl-CoA from acetyl-CoA: step 1/1. Component of the acetyl coenzyme A carboxylase (ACC) complex. First, biotin carboxylase catalyzes the carboxylation of biotin on its carrier protein (BCCP) and then the CO(2) group is transferred by the carboxyltransferase to acetyl-CoA to form malonyl-CoA. This chain is Acetyl-coenzyme A carboxylase carboxyl transferase subunit alpha, found in Cupriavidus necator (strain ATCC 17699 / DSM 428 / KCTC 22496 / NCIMB 10442 / H16 / Stanier 337) (Ralstonia eutropha).